We begin with the raw amino-acid sequence, 367 residues long: NADH-quinone oxidoreductase subunit D (367 aa).

This sequence belongs to the complex I 49 kDa subunit family. NDH-1 is composed of 14 different subunits. Subunits NuoB, C, D, E, F, and G constitute the peripheral sector of the complex.

The protein localises to the cell membrane. It catalyses the reaction a quinone + NADH + 5 H(+)(in) = a quinol + NAD(+) + 4 H(+)(out). Its function is as follows. NDH-1 shuttles electrons from NADH, via FMN and iron-sulfur (Fe-S) centers, to quinones in the respiratory chain. The immediate electron acceptor for the enzyme in this species is believed to be a menaquinone. Couples the redox reaction to proton translocation (for every two electrons transferred, four hydrogen ions are translocated across the cytoplasmic membrane), and thus conserves the redox energy in a proton gradient. The protein is NADH-quinone oxidoreductase subunit D of Geobacillus kaustophilus (strain HTA426).